Reading from the N-terminus, the 168-residue chain is 6,7-dimethyl-8-ribityllumazine synthase (168 aa).

Residues Phe24, 58 to 60 (ALE), and 82 to 84 (AVI) each bind 5-amino-6-(D-ribitylamino)uracil. Position 87–88 (87–88 (ET)) interacts with (2S)-2-hydroxy-3-oxobutyl phosphate. The active-site Proton donor is His90. Asn115 contacts 5-amino-6-(D-ribitylamino)uracil. Position 129 (Arg129) interacts with (2S)-2-hydroxy-3-oxobutyl phosphate.

The protein belongs to the DMRL synthase family.

It catalyses the reaction (2S)-2-hydroxy-3-oxobutyl phosphate + 5-amino-6-(D-ribitylamino)uracil = 6,7-dimethyl-8-(1-D-ribityl)lumazine + phosphate + 2 H2O + H(+). The protein operates within cofactor biosynthesis; riboflavin biosynthesis; riboflavin from 2-hydroxy-3-oxobutyl phosphate and 5-amino-6-(D-ribitylamino)uracil: step 1/2. Catalyzes the formation of 6,7-dimethyl-8-ribityllumazine by condensation of 5-amino-6-(D-ribitylamino)uracil with 3,4-dihydroxy-2-butanone 4-phosphate. This is the penultimate step in the biosynthesis of riboflavin. The sequence is that of 6,7-dimethyl-8-ribityllumazine synthase from Paraburkholderia phytofirmans (strain DSM 17436 / LMG 22146 / PsJN) (Burkholderia phytofirmans).